The following is a 172-amino-acid chain: NAD(P)H-quinone oxidoreductase subunit I, chloroplastic (172 aa).

4Fe-4S ferredoxin-type domains are found at residues 55–84 (GRIH…VDWK) and 95–124 (LNYS…MTEE). 8 residues coordinate [4Fe-4S] cluster: cysteine 64, cysteine 67, cysteine 70, cysteine 74, cysteine 104, cysteine 107, cysteine 110, and cysteine 114.

The protein belongs to the complex I 23 kDa subunit family. As to quaternary structure, NDH is composed of at least 16 different subunits, 5 of which are encoded in the nucleus. [4Fe-4S] cluster serves as cofactor.

It localises to the plastid. The protein localises to the chloroplast thylakoid membrane. It catalyses the reaction a plastoquinone + NADH + (n+1) H(+)(in) = a plastoquinol + NAD(+) + n H(+)(out). The enzyme catalyses a plastoquinone + NADPH + (n+1) H(+)(in) = a plastoquinol + NADP(+) + n H(+)(out). NDH shuttles electrons from NAD(P)H:plastoquinone, via FMN and iron-sulfur (Fe-S) centers, to quinones in the photosynthetic chain and possibly in a chloroplast respiratory chain. The immediate electron acceptor for the enzyme in this species is believed to be plastoquinone. Couples the redox reaction to proton translocation, and thus conserves the redox energy in a proton gradient. The chain is NAD(P)H-quinone oxidoreductase subunit I, chloroplastic from Olimarabidopsis pumila (Dwarf rocket).